The chain runs to 88 residues: ATP synthase subunit 9, mitochondrial (88 aa).

A run of 2 helical transmembrane segments spans residues 8-28 (IGAG…GNVF) and 45-72 (LFGY…LILF).

The protein belongs to the ATPase C chain family. In terms of assembly, F-type ATPases have 2 components, CF(1) - the catalytic core - and CF(0) - the membrane proton channel. CF(1) has five subunits: alpha(3), beta(3), gamma(1), delta(1), epsilon(1). CF(0) has three main subunits: a, b and c.

It is found in the mitochondrion membrane. The enzyme catalyses ATP + H2O + 4 H(+)(in) = ADP + phosphate + 5 H(+)(out). Functionally, this protein is one of the chains of the nonenzymatic membrane component (F0) of mitochondrial ATPase. The polypeptide is ATP synthase subunit 9, mitochondrial (ATP9) (Beta vulgaris (Sugar beet)).